A 99-amino-acid chain; its full sequence is A-type ATP synthase subunit F (99 aa).

The protein belongs to the V-ATPase F subunit family. Has multiple subunits with at least A(3), B(3), C, D, E, F, H, I and proteolipid K(x).

Its subcellular location is the cell membrane. Functionally, component of the A-type ATP synthase that produces ATP from ADP in the presence of a proton gradient across the membrane. The chain is A-type ATP synthase subunit F from Methanococcus maripaludis (strain DSM 14266 / JCM 13030 / NBRC 101832 / S2 / LL).